Reading from the N-terminus, the 349-residue chain is Beta-glucanase (349 aa).

The N-terminal stretch at 1-27 is a signal peptide; it reads MNIKKTAVKSALAVAAAAAALTTNVSA. A GH16 domain is found at 28-197; that stretch reads KDFSGAELYT…WVKVYKYTPG (170 aa). The active-site Nucleophile is the E79. The Proton donor role is filled by E83. The segment at 258-311 is disordered; sequence SFNGQVPRDDEPAPQSSSSAPASSSSVPASSSSVPASSSSAFVPPSSSSATNAI. Residues 270–307 are compositionally biased toward low complexity; that stretch reads APQSSSSAPASSSSVPASSSSVPASSSSAFVPPSSSSA. A run of 5 repeats spans residues 271–277, 278–284, 285–291, 292–298, and 301–307. The 5 X 7 AA tandem repeats of P-X-S-S-S-S-X stretch occupies residues 271–307; the sequence is PQSSSSAPASSSSVPASSSSVPASSSSAFVPPSSSSA.

Belongs to the glycosyl hydrolase 16 family.

The enzyme catalyses Hydrolysis of (1-&gt;4)-beta-D-glucosidic linkages in beta-D-glucans containing (1-&gt;3)- and (1-&gt;4)-bonds.. The protein is Beta-glucanase of Fibrobacter succinogenes (strain ATCC 19169 / S85).